Here is a 415-residue protein sequence, read N- to C-terminus: Peptide chain release factor subunit 1-1 (415 aa).

This sequence belongs to the eukaryotic release factor 1 family. As to quaternary structure, heterodimer of two subunits, one of which binds GTP.

It localises to the cytoplasm. Functionally, directs the termination of nascent peptide synthesis (translation) in response to the termination codons UAA, UAG and UGA. This chain is Peptide chain release factor subunit 1-1, found in Methanosarcina acetivorans (strain ATCC 35395 / DSM 2834 / JCM 12185 / C2A).